Reading from the N-terminus, the 258-residue chain is Acetylglutamate kinase (258 aa).

Residues 41-42 (GG), arginine 63, and asparagine 156 each bind substrate.

The protein belongs to the acetylglutamate kinase family. ArgB subfamily.

Its subcellular location is the cytoplasm. It carries out the reaction N-acetyl-L-glutamate + ATP = N-acetyl-L-glutamyl 5-phosphate + ADP. Its pathway is amino-acid biosynthesis; L-arginine biosynthesis; N(2)-acetyl-L-ornithine from L-glutamate: step 2/4. Catalyzes the ATP-dependent phosphorylation of N-acetyl-L-glutamate. This Geobacillus thermodenitrificans (strain NG80-2) protein is Acetylglutamate kinase.